Consider the following 349-residue polypeptide: Ferredoxin--NADP reductase 1 (349 aa).

FAD is bound by residues Glu36, Lys44, Tyr48, Val88, Leu123, Asp290, and Ser331.

Belongs to the ferredoxin--NADP reductase type 2 family. Homodimer. The cofactor is FAD.

It catalyses the reaction 2 reduced [2Fe-2S]-[ferredoxin] + NADP(+) + H(+) = 2 oxidized [2Fe-2S]-[ferredoxin] + NADPH. This is Ferredoxin--NADP reductase 1 from Bacillus licheniformis (strain ATCC 14580 / DSM 13 / JCM 2505 / CCUG 7422 / NBRC 12200 / NCIMB 9375 / NCTC 10341 / NRRL NRS-1264 / Gibson 46).